We begin with the raw amino-acid sequence, 374 residues long: 2-oxoglutarate-Fe(II) type oxidoreductase ppzC (374 aa).

Positions 111–130 (KDGPFDSGYRGPGTQRVNPT) are disordered. The region spanning 220–330 (YPDASLEINF…RVSMPFFWGF (111 aa)) is the Fe2OG dioxygenase domain. Fe cation-binding residues include His254, Asp256, and His311. Residue Arg321 coordinates 2-oxoglutarate.

This sequence belongs to the iron/ascorbate-dependent oxidoreductase family. Fe(2+) is required as a cofactor.

The catalysed reaction is peramine + 2-oxoglutarate + O2 = 8-hydroxyperamine + succinate + CO2. It functions in the pathway secondary metabolite biosynthesis. Its function is as follows. 2-oxoglutarate-Fe(II) type oxidoreductase; part of the gene cluster that mediates the biosynthesis of pyrrolopyrazines, secondary metabolites showing insecticidal activity. Within the pathway, ppzC uses peramine as substrate for hydroxylation to yield the novel analog 8-hydroxyperamine. The single multifunctional NRPS ppzA is sufficient to produce peramine via condensation of 1-pyrroline-5-carboxylate and arginine, N-methylation of the alpha-amino group of arginine and reduction of the thioester and the cyclization to form an iminium ion resulting in release from the peptide synthetase. Deprotonation of this intermediate and oxidation of the pyrroline ring would give rise to peramine. In Epichloe species that produce only peramine, the peramine synthetase gene is not localized in a gene cluster, in contrast to Metarhizium species that contain additional pyrrolopyrazine biosynthesis genes. The 2-oxoglutarate-Fe(II) type oxidoreductase ppzC hydroxylates peramine to yield the newly identified compound 8-hydroxyperamine whereas ppzD converts L-proline into trans-4-hydroxy-L-proline, a precursor of peramine biosynthesis. This chain is 2-oxoglutarate-Fe(II) type oxidoreductase ppzC, found in Metarhizium rileyi (strain RCEF 4871) (Nomuraea rileyi).